A 1707-amino-acid polypeptide reads, in one-letter code: Kinesin-like protein KIF1A (1707 aa).

Residues 5–354 form the Kinesin motor domain; it reads SVKVAVRVRP…LRYADRAKQI (350 aa). ATP contacts are provided by Gly102, Lys103, Ser104, Tyr105, and Ser215. Ser104 is a Mg(2+) binding site. The stretch at 439 to 466 forms a coiled coil; it reads SEEAIERLKETEKIIAELNETWEEKLRR. Residues 525-581 form the FHA domain; the sequence is TRVGREDAERRQDIVLSGHFIKEEHCIFRSDSRGGGEAVVTLEPCEGADTYVNGKKV. 2 coiled-coil regions span residues 637-671 and 811-831; these read EKQGIDMKQEMEQRLQELEDQYRREREEATYLLEQ and LEKLRQRLDLMREMYDRAAEV. The required for interaction with CALM1, PPFIA2 and TANC2 stretch occupies residues 657 to 1105; that stretch reads QYRREREEAT…LCKDVLSPLR (449 aa). Disordered regions lie at residues 1424-1462 and 1536-1576; these read PVPEVLSPASSEDSESRSSSGASSPLSAEGQPSPLEVPN and TDVR…EKEP. The span at 1429–1453 shows a compositional bias: low complexity; it reads LSPASSEDSESRSSSGASSPLSAEG. One can recognise a PH domain in the interval 1592 to 1690; that stretch reads IVSKKGYLHF…WLYAFNPLLA (99 aa).

This sequence belongs to the TRAFAC class myosin-kinesin ATPase superfamily. Kinesin family. Unc-104 subfamily. As to quaternary structure, dimeric motor; dimerization is required for ATP-driven processive motility. Monomer in vitro. Interacts with PPFIA1 and PPFIA4. Interacts with CALM1; the interaction is increased in presence of calcium and increases neuronal dense core vesicles motility. Interacts with PPFIA2 and TANC2; both interactions allow the recruitment of neuronal dense core vesicles to dendritic spines and decrease in presence of calcium. Interacts with SYT4 (unphosphorylated) and SYT11; both interactions increase in presence of calcium. Interacts with MADD.

The protein resides in the cytoplasm. Its subcellular location is the cytoskeleton. It localises to the cell projection. The protein localises to the neuron projection. It is found in the axon. The protein resides in the perinuclear region. Its subcellular location is the synapse. It localises to the cytoplasmic vesicle. The protein localises to the secretory vesicle. It is found in the neuronal dense core vesicle membrane. The catalysed reaction is ATP + H2O + a kinesin associated with a microtubule at position (n) = ADP + phosphate a kinesin associated with a microtubule at position (n+1, toward the plus end).. Its function is as follows. Kinesin motor with a plus-end-directed microtubule motor activity, involved in anterograde axonal transport of synaptic vesicle precursors. Also required for neuronal dense core vesicles (DCVs) transport to the dendritic spines and axons. The interaction calcium-dependent with CALM1 increases vesicle motility and interaction with the scaffolding proteins PPFIA2 and TANC2 recruits DCVs to synaptic sites. This is Kinesin-like protein KIF1A from Rattus norvegicus (Rat).